Consider the following 228-residue polypeptide: MNELTQTPPVADGNEPPFTRPGLVETWRERVSYQALSLGLVCALVAVALLLGNQLTHQRIVDAERQDRLAVLRQVLPQALYDNDPLADAFNVEDAELGLIEVYPARRAGQLTATAFQISTVGYGGPIVQFIALDSEGRILGVRVLSHKETPGLADKIEVTRSDWIKAFDGLSLASTPLDQWAVKKDGGQFDQFAGATITPRAIVKGVLRALEFQARQSTAQSNQETRP.

A helical membrane pass occupies residues 35 to 55 (ALSLGLVCALVAVALLLGNQL). An FMN phosphoryl threonine modification is found at Thr-197.

It belongs to the RnfG family. In terms of assembly, the complex is composed of six subunits: RnfA, RnfB, RnfC, RnfD, RnfE and RnfG. It depends on FMN as a cofactor.

The protein resides in the cell inner membrane. Functionally, part of a membrane-bound complex that couples electron transfer with translocation of ions across the membrane. This chain is Ion-translocating oxidoreductase complex subunit G, found in Stutzerimonas stutzeri (Pseudomonas stutzeri).